A 109-amino-acid chain; its full sequence is Protein FAM32A-like (109 aa).

A disordered region spans residues 1 to 48; sequence MSEYKSVQKGSLKLKGVSLPSKKKKKKNKEMKRLEEQVLTSENEEGTK. A compositionally biased stretch (low complexity) spans 9–20; sequence KGSLKLKGVSLP. Residues 21 to 30 show a composition bias toward basic residues; sequence SKKKKKKNKE.

This sequence belongs to the FAM32 family.

Its subcellular location is the nucleus. In terms of biological role, may induce G2 arrest and apoptosis. May also increase cell sensitivity to apoptotic stimuli. This is Protein FAM32A-like (fam32al) from Danio rerio (Zebrafish).